A 471-amino-acid polypeptide reads, in one-letter code: Lincomycin resistance protein LmrB (471 aa).

The next 13 helical transmembrane spans lie at 15 to 34 (PIIA…ETAL), 55 to 77 (LTTG…LQWF), 82 to 104 (LFFT…PTFA), 111 to 131 (VVQA…ILLI), 141 to 163 (MGMI…GLIL), 170 to 187 (WIFW…LFGM), 202 to 224 (DILS…SSAG), 231 to 253 (ATVL…RQLT), 268 to 290 (MFTL…MILL), 297 to 319 (SLAL…NGLM), 329 to 351 (AYGP…FFLT), 358 to 380 (SALT…MMPA), and 445 to 467 (GIQN…SLFI).

Belongs to the major facilitator superfamily. EmrB family.

The protein resides in the cell membrane. In terms of biological role, proton-dependent transporter. May mediate the efflux of lincomycin. The chain is Lincomycin resistance protein LmrB (lmrB) from Listeria innocua serovar 6a (strain ATCC BAA-680 / CLIP 11262).